We begin with the raw amino-acid sequence, 177 residues long: PBAN-type neuropeptides (177 aa).

Residues Met-1–Gly-23 form the signal peptide. The propeptide occupies Glu-24–Lys-54. Residues Glu-28–Arg-73 form a disordered region. Over residues Ser-31–Gly-45 the composition is skewed to polar residues. Low complexity predominate over residues Cys-47–Thr-59. Leu-74 carries the leucine amide modification. A propeptide spanning residues His-78–Glu-113 is cleaved from the precursor. 3 positions are modified to leucine amide: Leu-124, Leu-154, and Leu-166. Positions Gln-169–Ile-177 are excised as a propeptide.

The protein belongs to the pyrokinin family. As to expression, pyrokinins (PK) 1 to 4 are expressed in the retrocerebral complex. PK 1 is expressed in central brain, anntennal lobes and abominal ganglia. PK 2 is expressed in optical lobes and in gnathal, thoracic and abdominal ganglia. PK 3 is expressed in optical lobes and in thoracic and abdominal ganglia (at protein level).

The protein localises to the secreted. In terms of biological role, pyrokinins mediate visceral muscle contractile activity (myotropic activity). The chain is PBAN-type neuropeptides from Camponotus floridanus (Florida carpenter ant).